The primary structure comprises 250 residues: MNDFNRGYARSIPADRADMSVDAGLRKFMLGVYNKVALGLVVSGALAYATSSVPAVRDLLFVVQGGRLAGVTPLYMVVAFAPLVLMLIAGFAMRNPKPETAGALYWTIVSLIGASLGSVMLRYTGESVAATFFVTATAFGGLSLFGYTTKKDLTGFGSFLMMGVIGLIVASIVSIFLKSPALLFAINVLGVLIFSGLIAYDTQRLKMTYYEMGGDRASMAVATNFGALSLYINFINLFQFLLSFFGGNRE.

7 consecutive transmembrane segments (helical) span residues 36–56 (VALGLVVSGALAYATSSVPAV), 73–93 (PLYMVVAFAPLVLMLIAGFAM), 101–121 (AGALYWTIVSLIGASLGSVML), 128–148 (VAATFFVTATAFGGLSLFGYT), 156–176 (FGSFLMMGVIGLIVASIVSIF), 180–200 (PALLFAINVLGVLIFSGLIAY), and 225–245 (FGALSLYINFINLFQFLLSFF).

The protein belongs to the BI1 family.

It is found in the cell membrane. This is an uncharacterized protein from Caulobacter vibrioides (strain ATCC 19089 / CIP 103742 / CB 15) (Caulobacter crescentus).